A 277-amino-acid chain; its full sequence is MGIKFTKMHGLGNDFIVLDGVNQSIQLTVEQIQKLANRHTGIGFDQCLLIESSQTEGIDFNYRIFNADGQEVGQCGNGARCIALFARYYGLTAKNKLTVATKTTLMDLIINEDNSVSVNMGVPRLAPGEIPLLADRQSPEYSLELNNGNTVNLHAISVGNPHAVLLVENIDTAPVNSLGQQISFHPQFPEQVNVGFMQIINHEKINLRVYERGCGETIACGSGAVAAAAIARLFYNLSDKITVHLPGGDLCIQWPCPTAPIILTGPAAFVYEGTLLS.

The substrate site is built by asparagine 13, glutamine 46, and asparagine 66. Cysteine 75 acts as the Proton donor in catalysis. Substrate-binding positions include 76–77, asparagine 160, asparagine 193, and 211–212; these read GN and ER. Cysteine 220 acts as the Proton acceptor in catalysis. 221–222 is a binding site for substrate; sequence GS.

The protein belongs to the diaminopimelate epimerase family. As to quaternary structure, homodimer.

The protein localises to the cytoplasm. The enzyme catalyses (2S,6S)-2,6-diaminopimelate = meso-2,6-diaminopimelate. It functions in the pathway amino-acid biosynthesis; L-lysine biosynthesis via DAP pathway; DL-2,6-diaminopimelate from LL-2,6-diaminopimelate: step 1/1. Functionally, catalyzes the stereoinversion of LL-2,6-diaminopimelate (L,L-DAP) to meso-diaminopimelate (meso-DAP), a precursor of L-lysine and an essential component of the bacterial peptidoglycan. The chain is Diaminopimelate epimerase from Legionella pneumophila subsp. pneumophila (strain Philadelphia 1 / ATCC 33152 / DSM 7513).